Reading from the N-terminus, the 87-residue chain is Small ribosomal subunit protein uS17 (87 aa).

Belongs to the universal ribosomal protein uS17 family. As to quaternary structure, part of the 30S ribosomal subunit.

In terms of biological role, one of the primary rRNA binding proteins, it binds specifically to the 5'-end of 16S ribosomal RNA. This chain is Small ribosomal subunit protein uS17, found in Staphylococcus haemolyticus (strain JCSC1435).